An 81-amino-acid chain; its full sequence is Putative CNGA1-overlapping antisense gene protein (81 aa).

Expressed in brain, notably in regions involved in long-term potentiation and long-term depression, such as hippocampal CA1 and CA3, dentate gyrus and cerebellar Purkinje layer.

The protein is Putative CNGA1-overlapping antisense gene protein of Homo sapiens (Human).